A 178-amino-acid chain; its full sequence is MLEGIVRESIGRKAAKALKRDGYLIANIYGKGLENINAAFKVNEFIKEVRKKTTLIFDVKVGSQTLSVVVVDYQKDSVTAELKHVDLKVAQKGVISKYMVPVKITGTAIGLKNKGVLIQSKRRLKVKCAAENLPNFFELDVSKLDVGDALLVRDIVVPAGVTMIDADRVAVVGVEKAR.

Belongs to the bacterial ribosomal protein bL25 family. CTC subfamily. As to quaternary structure, part of the 50S ribosomal subunit; part of the 5S rRNA/L5/L18/L25 subcomplex. Contacts the 5S rRNA. Binds to the 5S rRNA independently of L5 and L18.

In terms of biological role, this is one of the proteins that binds to the 5S RNA in the ribosome where it forms part of the central protuberance. The polypeptide is Large ribosomal subunit protein bL25 (Campylobacter jejuni subsp. jejuni serotype O:23/36 (strain 81-176)).